The following is a 236-amino-acid chain: Acetate--CoA ligase [ADP-forming] II subunit beta (236 aa).

The ATP-grasp domain maps to 26-62 (KQVLKAYGLPVPEEKLAKTLDEALKYAEEIGYPVAMK). 52-63 (AEEIGYPVAMKL) is a binding site for ATP.

The protein belongs to the acetate CoA ligase beta subunit family. Heterotetramer of two alpha and two beta subunits.

The enzyme catalyses acetate + ATP + CoA = acetyl-CoA + ADP + phosphate. In terms of biological role, catalyzes the reversible formation of acetate and ATP from acetyl-CoA by using ADP and phosphate. Can use other substrates such as phenylacetyl-CoA, indoleacetyl-CoA and isobutyryl-CoA, but not succinyl-CoA. Seems to be involved primarily in the degradation of aryl-CoA esters to the corresponding acids. Participates in the conversion of acetyl-CoA to acetate and in the degradation of branched-chain amino acids via branched-chain-acyl-CoA esters. The chain is Acetate--CoA ligase [ADP-forming] II subunit beta from Pyrococcus furiosus (strain ATCC 43587 / DSM 3638 / JCM 8422 / Vc1).